We begin with the raw amino-acid sequence, 116 residues long: Large ribosomal subunit protein bL19 (116 aa).

The protein belongs to the bacterial ribosomal protein bL19 family.

In terms of biological role, this protein is located at the 30S-50S ribosomal subunit interface and may play a role in the structure and function of the aminoacyl-tRNA binding site. In Pseudomonas putida (strain W619), this protein is Large ribosomal subunit protein bL19.